Here is a 163-residue protein sequence, read N- to C-terminus: Neurotrophin-3 (163 aa).

The signal sequence occupies residues 1–3 (IQS). Residues 4–119 (TSMDQGILTE…VLNRTSRRKR (116 aa)) constitute a propeptide that is removed on maturation. The N-linked (GlcNAc...) asparagine glycan is linked to Asn-112.

This sequence belongs to the NGF-beta family.

It localises to the secreted. In terms of biological role, seems to promote the survival of visceral and proprioceptive sensory neurons. This is Neurotrophin-3 (NTF3) from Epicrates cenchria (Rainbow boa).